Reading from the N-terminus, the 295-residue chain is Sperm acrosome membrane-associated protein 1 (295 aa).

Positions 1–29 (MSPGGAGCSAGLLLTVGWLLLAGLQSTCG) are cleaved as a signal peptide. The Extracellular segment spans residues 30–220 (INVTAVQDPS…SRPDTDAVLV (191 aa)). Residues 39 to 71 (SLVSEGENEGEEEAENDSEVENEPQAEAEQDVS) are disordered. Residues 44 to 68 (GENEGEEEAENDSEVENEPQAEAEQ) show a composition bias toward acidic residues. Residue Asn-72 is glycosylated (N-linked (GlcNAc...) asparagine). The chain crosses the membrane as a helical span at residues 221-241 (FVLTIGVIICIFVIFVLIFII). Residues 242–295 (VNWATVKDFWASKASTTEIQSELSSMKYKDSTSLDQSPTEIPGHEDDALSEWNE) lie on the Cytoplasmic side of the membrane. The residue at position 256 (Ser-256) is a Phosphoserine. Residues 263–295 (ELSSMKYKDSTSLDQSPTEIPGHEDDALSEWNE) form a disordered region. Tyr-269 is subject to Phosphotyrosine. A phosphoserine mark is found at Ser-278 and Ser-291.

Interacts with CYLC1; the interaction may be relevant for proper acrosome attachment to the nuclear envelope. N-glycosylated. As to expression, detected in spermatozoa (at protein level).

It localises to the cytoplasmic vesicle. It is found in the secretory vesicle. The protein localises to the acrosome inner membrane. In terms of biological role, plays a role in acrosome expansion and establishment of normal sperm morphology during spermatogenesis. Important for male fertility. In Sus scrofa (Pig), this protein is Sperm acrosome membrane-associated protein 1.